The primary structure comprises 302 residues: Methionyl-tRNA formyltransferase (302 aa).

103–106 (SLLP) lines the (6S)-5,6,7,8-tetrahydrofolate pocket.

It belongs to the Fmt family.

The enzyme catalyses L-methionyl-tRNA(fMet) + (6R)-10-formyltetrahydrofolate = N-formyl-L-methionyl-tRNA(fMet) + (6S)-5,6,7,8-tetrahydrofolate + H(+). Attaches a formyl group to the free amino group of methionyl-tRNA(fMet). The formyl group appears to play a dual role in the initiator identity of N-formylmethionyl-tRNA by promoting its recognition by IF2 and preventing the misappropriation of this tRNA by the elongation apparatus. This Pseudothermotoga lettingae (strain ATCC BAA-301 / DSM 14385 / NBRC 107922 / TMO) (Thermotoga lettingae) protein is Methionyl-tRNA formyltransferase.